A 138-amino-acid polypeptide reads, in one-letter code: Protein Turandot B (138 aa).

The signal sequence occupies residues Met-1 to Ala-21.

It belongs to the Turandot family.

It is found in the secreted. In terms of biological role, a humoral factor that may play a role in stress tolerance. In Drosophila melanogaster (Fruit fly), this protein is Protein Turandot B.